A 258-amino-acid chain; its full sequence is MRVAPSGGPPHHHAMIRATPPKRRLKAGTINVAPSFMRERDLMECGVWPVAGCDEVGRGPLAGPVVAAAVVLDPNHIPKGIDDSKRLTAARREELFEEIVATASFAVACAPIERIDRDNILRASLWALARAVHALPDTPKHVFVDGRDRIDIACACEPVIGGDGLVLSIAAASIVAKVTRDRLMCKLARDCPGYGFETHKGYAVPGHLEALGRLGPSSHHRSFFAPVVAARERHRALLAGASASISETSATVAVEAVI.

Positions 1 to 20 are disordered; it reads MRVAPSGGPPHHHAMIRATP. Basic residues predominate over residues 10–20; sequence PHHHAMIRATP. Residues 48–236 form the RNase H type-2 domain; it reads WPVAGCDEVG…VVAARERHRA (189 aa). A divalent metal cation contacts are provided by Asp54, Glu55, and Asp145.

It belongs to the RNase HII family. Mn(2+) is required as a cofactor. Requires Mg(2+) as cofactor.

It localises to the cytoplasm. It carries out the reaction Endonucleolytic cleavage to 5'-phosphomonoester.. Its function is as follows. Endonuclease that specifically degrades the RNA of RNA-DNA hybrids. The sequence is that of Ribonuclease HII from Nitrobacter winogradskyi (strain ATCC 25391 / DSM 10237 / CIP 104748 / NCIMB 11846 / Nb-255).